Consider the following 139-residue polypeptide: Large ribosomal subunit protein mL54 (139 aa).

Residues 1–50 (MPFIESMAPLSRAITRGISQFSCYSNTLVLRSSRNSSSSLVKRSYVSSRV) constitute a mitochondrion transit peptide. Over residues 35–50 (NSSSSLVKRSYVSSRV) the composition is skewed to low complexity. The tract at residues 35-74 (NSSSSLVKRSYVSSRVSPKKPQHNSDATSSAQKVANKTHT) is disordered. Over residues 58–74 (NSDATSSAQKVANKTHT) the composition is skewed to polar residues.

The protein belongs to the mitochondrion-specific ribosomal protein mL54 family. In terms of assembly, component of the mitochondrial large ribosomal subunit (mt-LSU). Mature yeast 74S mitochondrial ribosomes consist of a small (37S) and a large (54S) subunit. The 37S small subunit contains a 15S ribosomal RNA (15S mt-rRNA) and at least 32 different proteins. The 54S large subunit contains a 21S rRNA (21S mt-rRNA) and at least 45 different proteins.

It is found in the mitochondrion. Component of the mitochondrial ribosome (mitoribosome), a dedicated translation machinery responsible for the synthesis of mitochondrial genome-encoded proteins, including at least some of the essential transmembrane subunits of the mitochondrial respiratory chain. The mitoribosomes are attached to the mitochondrial inner membrane and translation products are cotranslationally integrated into the membrane. mL54 may have a meiosis-specific role as it accumulates during the middle stage of sporulation. In Schizosaccharomyces pombe (strain 972 / ATCC 24843) (Fission yeast), this protein is Large ribosomal subunit protein mL54 (mrpl37).